The primary structure comprises 508 residues: WD repeat-containing protein JIP5 (508 aa).

6 WD repeats span residues 62–105 (EARK…WRTK), 106–145 (RHKGSVRALAIDHDGKHVYTIGADNVLKKADTHSGKVVKK), 149–188 (DGGSKVTKLVKSATHDFLVMGDEVGTIVVLDSNDLTTKNT), 193–233 (HGGD…MKQP), 253–294 (DQED…LEDQ), and 345–382 (SGLDEVGMLDLDFEYRLVSGGMDKLKIWEVPKEENSDS). A disordered region spans residues 376 to 508 (KEENSDSDSD…SHGITKFDGL (133 aa)). A compositionally biased stretch (acidic residues) spans 380–393 (SDSDSDSDINDDSE). Residues 407–419 (ELGSGSESEVESD) show a composition bias toward low complexity. A WD 7 repeat occupies 431–472 (CTGSDLPGDIEGSEGENNSNDDDNHDDREELWKELDQPTSDE). The segment covering 441-454 (EGSEGENNSNDDDN) has biased composition (acidic residues). The segment covering 455-466 (HDDREELWKELD) has biased composition (basic and acidic residues). Over residues 478 to 492 (KRSLKVKDKKNKKFK) the composition is skewed to basic residues.

It belongs to the WD repeat WDR55 family.

It is found in the nucleus. Its subcellular location is the nucleolus. The chain is WD repeat-containing protein JIP5 (JIP5) from Candida glabrata (strain ATCC 2001 / BCRC 20586 / JCM 3761 / NBRC 0622 / NRRL Y-65 / CBS 138) (Yeast).